We begin with the raw amino-acid sequence, 154 residues long: Ribosome maturation factor RimP (154 aa).

This sequence belongs to the RimP family.

It localises to the cytoplasm. Required for maturation of 30S ribosomal subunits. This Acetivibrio thermocellus (strain ATCC 27405 / DSM 1237 / JCM 9322 / NBRC 103400 / NCIMB 10682 / NRRL B-4536 / VPI 7372) (Clostridium thermocellum) protein is Ribosome maturation factor RimP.